The following is a 214-amino-acid chain: Glutathione S-transferase 1 (214 aa).

Positions 2–83 (APMKLYGAVM…YAARKNKPEL (82 aa)) constitute a GST N-terminal domain. Residues Ser-12, 41–42 (HK), 54–55 (QV), and 67–68 (ES) contribute to the glutathione site. Residues 88 to 214 (NLEEAAMVDV…KVAALMKPSA (127 aa)) form the GST C-terminal domain.

This sequence belongs to the GST superfamily. Phi family. In terms of assembly, homodimer or heterodimer of GST-I and GST-IV (=GST-II). Expressed in the stem and leaves, lower levels are seen in the pollen and endosperm.

It carries out the reaction RX + glutathione = an S-substituted glutathione + a halide anion + H(+). Conjugation of reduced glutathione to a wide number of exogenous and endogenous hydrophobic electrophiles. Involved in the detoxification of certain herbicides. The sequence is that of Glutathione S-transferase 1 (GST1) from Zea mays (Maize).